The sequence spans 119 residues: Large ribosomal subunit protein bL20 (119 aa).

Belongs to the bacterial ribosomal protein bL20 family.

Its function is as follows. Binds directly to 23S ribosomal RNA and is necessary for the in vitro assembly process of the 50S ribosomal subunit. It is not involved in the protein synthesizing functions of that subunit. The polypeptide is Large ribosomal subunit protein bL20 (Latilactobacillus sakei subsp. sakei (strain 23K) (Lactobacillus sakei subsp. sakei)).